The sequence spans 112 residues: Nitrogenase-stabilizing/protective protein NifW (112 aa).

The protein belongs to the NifW family. In terms of assembly, homotrimer; associates with NifD.

Functionally, may protect the nitrogenase Fe-Mo protein from oxidative damage. The sequence is that of Nitrogenase-stabilizing/protective protein NifW from Rhodopseudomonas palustris (strain BisA53).